The following is a 121-amino-acid chain: Small ribosomal subunit protein uS13 (121 aa).

Positions 93–121 are disordered; the sequence is RGLPMRGQRTRTNARTRKGPRKGAAALKK.

This sequence belongs to the universal ribosomal protein uS13 family. As to quaternary structure, part of the 30S ribosomal subunit. Forms a loose heterodimer with protein S19. Forms two bridges to the 50S subunit in the 70S ribosome.

Functionally, located at the top of the head of the 30S subunit, it contacts several helices of the 16S rRNA. In the 70S ribosome it contacts the 23S rRNA (bridge B1a) and protein L5 of the 50S subunit (bridge B1b), connecting the 2 subunits; these bridges are implicated in subunit movement. Contacts the tRNAs in the A and P-sites. This Acidovorax ebreus (strain TPSY) (Diaphorobacter sp. (strain TPSY)) protein is Small ribosomal subunit protein uS13.